We begin with the raw amino-acid sequence, 716 residues long: Fatty acid oxidation complex subunit alpha (716 aa).

The tract at residues 1 to 189 (MIYQSPTIQV…KVGAVDAVVA (189 aa)) is enoyl-CoA hydratase/isomerase. D296 is a substrate binding site. Positions 311–716 (KEVNNAAVLG…AANNGSYYQA (406 aa)) are 3-hydroxyacyl-CoA dehydrogenase. NAD(+)-binding positions include M324, D343, 400-402 (VVE), K407, and S429. H450 serves as the catalytic For 3-hydroxyacyl-CoA dehydrogenase activity. N453 is a binding site for NAD(+). The substrate site is built by N500 and Y660.

It in the N-terminal section; belongs to the enoyl-CoA hydratase/isomerase family. In the C-terminal section; belongs to the 3-hydroxyacyl-CoA dehydrogenase family. In terms of assembly, heterotetramer of two alpha chains (FadB) and two beta chains (FadA).

It catalyses the reaction a (3S)-3-hydroxyacyl-CoA + NAD(+) = a 3-oxoacyl-CoA + NADH + H(+). The catalysed reaction is a (3S)-3-hydroxyacyl-CoA = a (2E)-enoyl-CoA + H2O. The enzyme catalyses a 4-saturated-(3S)-3-hydroxyacyl-CoA = a (3E)-enoyl-CoA + H2O. It carries out the reaction (3S)-3-hydroxybutanoyl-CoA = (3R)-3-hydroxybutanoyl-CoA. It catalyses the reaction a (3Z)-enoyl-CoA = a 4-saturated (2E)-enoyl-CoA. The catalysed reaction is a (3E)-enoyl-CoA = a 4-saturated (2E)-enoyl-CoA. It participates in lipid metabolism; fatty acid beta-oxidation. In terms of biological role, involved in the aerobic and anaerobic degradation of long-chain fatty acids via beta-oxidation cycle. Catalyzes the formation of 3-oxoacyl-CoA from enoyl-CoA via L-3-hydroxyacyl-CoA. It can also use D-3-hydroxyacyl-CoA and cis-3-enoyl-CoA as substrate. This is Fatty acid oxidation complex subunit alpha from Shewanella baltica (strain OS223).